Reading from the N-terminus, the 29-residue chain is SCSSGCSDCNSDSCQCTLNQFTNSDSCCC.

Contains 4 disulfide bonds. As to expression, expressed by the venom duct.

The protein localises to the secreted. This chain is Augerpeptide hheTx2, found in Hastula hectica (Sea snail).